A 501-amino-acid polypeptide reads, in one-letter code: WD repeat-containing protein wdr-5.3 (501 aa).

Disordered regions lie at residues 1–35 (MNPE…LESN), 58–85 (PIGV…YQSH), and 155–197 (KSAE…ITKK). Over residues 22 to 35 (PNQQSLQSRMLESN) the composition is skewed to polar residues. Over residues 167–177 (SITTKPTSTIQ) the composition is skewed to polar residues. WD repeat units follow at residues 211 to 241 (GHTK…KVWN), 253 to 283 (SHQL…KIFD), 295 to 325 (GHTN…RVWD), 337 to 367 (AHSD…RVWD), 381 to 410 (DHAP…KLWD), 422 to 455 (GHKN…LVWS), and 467 to 499 (GHTT…RIWR).

Belongs to the WD repeat WDR5/wds family.

Functionally, not required for methylation of histone H3 'Lys-4'. The sequence is that of WD repeat-containing protein wdr-5.3 (wdr-5.3) from Caenorhabditis elegans.